The primary structure comprises 303 residues: Sulfate adenylyltransferase subunit 2 (303 aa).

This sequence belongs to the PAPS reductase family. CysD subfamily. In terms of assembly, heterodimer composed of CysD, the smaller subunit, and CysN.

It carries out the reaction sulfate + ATP + H(+) = adenosine 5'-phosphosulfate + diphosphate. The protein operates within sulfur metabolism; hydrogen sulfide biosynthesis; sulfite from sulfate: step 1/3. With CysN forms the ATP sulfurylase (ATPS) that catalyzes the adenylation of sulfate producing adenosine 5'-phosphosulfate (APS) and diphosphate, the first enzymatic step in sulfur assimilation pathway. APS synthesis involves the formation of a high-energy phosphoric-sulfuric acid anhydride bond driven by GTP hydrolysis by CysN coupled to ATP hydrolysis by CysD. The sequence is that of Sulfate adenylyltransferase subunit 2 from Sulfurimonas denitrificans (strain ATCC 33889 / DSM 1251) (Thiomicrospira denitrificans (strain ATCC 33889 / DSM 1251)).